A 732-amino-acid chain; its full sequence is Zinc-exporting P-type ATPase (732 aa).

Residues 29–96 enclose the HMA domain; sequence GRMRVRADWV…AIGGAKHVAA (68 aa). The next 6 membrane-spanning stretches (helical) occupy residues 105–123, 146–164, 172–186, 195–209, 342–366, and 372–390; these read HSTEIRNTDVLRMVIGGAA, MVATGVTIFTGYPFLRGAL, AGTDALVSAATIASL, LTVLWLLNIGEYLQD, VGENFSRRFVPTSFIVSAITLLVTG, and MTMLLIACPCAVGLSTPTA. Asp-423 serves as the catalytic 4-aspartylphosphate intermediate. The Mg(2+) site is built by Asp-423, Thr-425, and Asp-625. The next 2 helical transmembrane spans lie at 676-695 and 705-724; these read AVDVIRQNYGMSIAVNAAGL and PVLAAILHNASSVAVVANSS.

The protein belongs to the cation transport ATPase (P-type) (TC 3.A.3) family. Type IB subfamily.

The protein resides in the cell membrane. The enzyme catalyses Zn(2+)(in) + ATP + H2O = Zn(2+)(out) + ADP + phosphate + H(+). Its function is as follows. Zn(2+) efflux transporter which is involved in detoxification of zinc during infection. The protein is Zinc-exporting P-type ATPase of Mycobacterium marinum (strain ATCC BAA-535 / M).